The following is a 438-amino-acid chain: Enolase (438 aa).

Substrate contacts are provided by His-159 and Glu-168. Glu-211 serves as the catalytic Proton donor. Mg(2+) contacts are provided by Asp-246, Glu-297, and Asp-322. The substrate site is built by Glu-297 and Asp-322. Residue Lys-347 is the Proton acceptor of the active site. Residues Ser-374–Ser-377 and Lys-398 contribute to the substrate site.

The protein belongs to the enolase family. As to quaternary structure, homodimer. The cofactor is Mg(2+).

It is found in the cytoplasm. It carries out the reaction (2R)-2-phosphoglycerate = phosphoenolpyruvate + H2O. It participates in carbohydrate degradation; glycolysis; pyruvate from D-glyceraldehyde 3-phosphate: step 4/5. This chain is Enolase (ENO), found in Alternaria alternata (Alternaria rot fungus).